Reading from the N-terminus, the 91-residue chain is Small integral membrane protein 12-B (91 aa).

The helical transmembrane segment at 12-34 (YAPYITFPVAFVVGAVGYQLEWF) threads the bilayer.

It belongs to the SMIM12 family.

The protein localises to the membrane. The chain is Small integral membrane protein 12-B (smim12-b) from Xenopus laevis (African clawed frog).